A 1148-amino-acid chain; its full sequence is Phospholipid-transporting ATPase IB (1148 aa).

Residues Met1 to Arg54 lie on the Cytoplasmic side of the membrane. Thr5 is subject to Phosphothreonine. A helical membrane pass occupies residues Ala55–Thr75. Over Gly76–Thr79 the chain is Exoplasmic loop. Residues Thr80–Phe100 form a helical membrane-spanning segment. Over Lys101 to Gln276 the chain is Cytoplasmic. The helical transmembrane segment at Ile277–Tyr297 threads the bilayer. At Trp298–Leu324 the chain is on the exoplasmic loop side. The helical transmembrane segment at Thr325–Val345 threads the bilayer. The Cytoplasmic portion of the chain corresponds to Lys346–Val847. The active-site 4-aspartylphosphate intermediate is Asp388. ATP-binding residues include Asp388, Lys389, Thr390, Glu488, Phe529, Lys552, Arg585, Thr665, Gly666, Asp667, Arg755, and Lys761. A Mg(2+)-binding site is contributed by Asp388. A Mg(2+)-binding site is contributed by Thr390. Asp781 contributes to the Mg(2+) binding site. Asn784 and Asp785 together coordinate ATP. Mg(2+) is bound at residue Asp785. A helical transmembrane segment spans residues Val848–Phe868. Residues Glu869–Arg870 are Exoplasmic loop-facing. The chain crosses the membrane as a helical span at residues Trp871–Phe891. The Cytoplasmic portion of the chain corresponds to Glu892–Lys919. The helical transmembrane segment at Val920–Met940 threads the bilayer. Residues Lys941–Tyr957 are Exoplasmic loop-facing. A helical membrane pass occupies residues Leu958–Leu978. Topologically, residues Glu979–His988 are cytoplasmic. Residues Leu989–Trp1009 traverse the membrane as a helical segment. Over Pro1010–Thr1023 the chain is Exoplasmic loop. The chain crosses the membrane as a helical span at residues Met1024–Ile1044. The Cytoplasmic portion of the chain corresponds to Glu1045–Lys1148. The interval Pro1102–His1126 is disordered.

It belongs to the cation transport ATPase (P-type) (TC 3.A.3) family. Type IV subfamily. In terms of assembly, component of a P4-ATPase flippase complex which consists of a catalytic alpha subunit and an accessory beta subunit. Interacts with TMEM30A to form a flippase complex. Mg(2+) serves as cofactor. As to expression, expressed in retinal photoreceptor cells and testis.

The protein resides in the membrane. It is found in the golgi apparatus membrane. The protein localises to the endosome membrane. It localises to the cell membrane. Its subcellular location is the photoreceptor outer segment membrane. The protein resides in the photoreceptor inner segment membrane. It carries out the reaction ATP + H2O + phospholipidSide 1 = ADP + phosphate + phospholipidSide 2.. It catalyses the reaction a 1,2-diacyl-sn-glycero-3-phospho-L-serine(out) + ATP + H2O = a 1,2-diacyl-sn-glycero-3-phospho-L-serine(in) + ADP + phosphate + H(+). The catalysed reaction is a 1,2-diacyl-sn-glycero-3-phosphoethanolamine(in) + ATP + H2O = a 1,2-diacyl-sn-glycero-3-phosphoethanolamine(out) + ADP + phosphate + H(+). With respect to regulation, ATPase activity is stimulated by phosphatidylserine (PS) and minimally by phosphatidylethanolamine (PE). ATPase activity is inhibited by N-ethylmaleimide (NEM) and vanadate. Flippase activity is inhibited by NEM and 1,2-dioleoyl-sn-glycero-3-phospho-L-serine (DOPS). Its function is as follows. Catalytic component of a P4-ATPase flippase complex which catalyzes the hydrolysis of ATP coupled to the transport of aminophospholipids from the outer to the inner leaflet of various membranes and ensures the maintenance of asymmetric distribution of phospholipids. Able to translocate phosphatidylserine, but not phosphatidylcholine. Phospholipid translocation seems also to be implicated in vesicle formation and in uptake of lipid signaling molecules. Reconstituted to liposomes, the ATP8A2:TMEM30A flippase complex predominantly transports phosphatidylserine (PS) and to a lesser extent phosphatidylethanolamine (PE). Phospholipid translocation is not associated with a countertransport of an inorganic ion or other charged substrate from the cytoplasmic side toward the exoplasm in connection with the phosphorylation from ATP. ATP8A2:TMEM30A may be involved in regulation of neurite outgrowth. Proposed to function in the generation and maintenance of phospholipid asymmetry in photoreceptor disk membranes and neuronal axon membranes. May be involved in vesicle trafficking in neuronal cells. Required for normal visual and auditory function; involved in photoreceptor and inner ear spiral ganglion cell survival. This is Phospholipid-transporting ATPase IB from Bos taurus (Bovine).